A 279-amino-acid chain; its full sequence is Energy-coupling factor transporter ATP-binding protein EcfA1 (279 aa).

The region spanning Leu-6 to Asp-240 is the ABC transporter domain. Position 40-47 (Gly-40–Ser-47) interacts with ATP.

This sequence belongs to the ABC transporter superfamily. Energy-coupling factor EcfA family. As to quaternary structure, forms a stable energy-coupling factor (ECF) transporter complex composed of 2 membrane-embedded substrate-binding proteins (S component), 2 ATP-binding proteins (A component) and 2 transmembrane proteins (T component).

It is found in the cell membrane. In terms of biological role, ATP-binding (A) component of a common energy-coupling factor (ECF) ABC-transporter complex. Unlike classic ABC transporters this ECF transporter provides the energy necessary to transport a number of different substrates. In Geobacillus kaustophilus (strain HTA426), this protein is Energy-coupling factor transporter ATP-binding protein EcfA1.